The chain runs to 465 residues: Trigger factor (465 aa).

One can recognise a PPIase FKBP-type domain in the interval G163 to A248. A disordered region spans residues E431–K465. A compositionally biased stretch (basic and acidic residues) spans E443–K465.

It belongs to the FKBP-type PPIase family. Tig subfamily.

The protein localises to the cytoplasm. The catalysed reaction is [protein]-peptidylproline (omega=180) = [protein]-peptidylproline (omega=0). Its function is as follows. Involved in protein export. Acts as a chaperone by maintaining the newly synthesized protein in an open conformation. Functions as a peptidyl-prolyl cis-trans isomerase. The sequence is that of Trigger factor from Mesomycoplasma hyopneumoniae (strain 232) (Mycoplasma hyopneumoniae).